Here is a 202-residue protein sequence, read N- to C-terminus: Imidazoleglycerol-phosphate dehydratase (202 aa).

It belongs to the imidazoleglycerol-phosphate dehydratase family.

It localises to the cytoplasm. The catalysed reaction is D-erythro-1-(imidazol-4-yl)glycerol 3-phosphate = 3-(imidazol-4-yl)-2-oxopropyl phosphate + H2O. It functions in the pathway amino-acid biosynthesis; L-histidine biosynthesis; L-histidine from 5-phospho-alpha-D-ribose 1-diphosphate: step 6/9. The sequence is that of Imidazoleglycerol-phosphate dehydratase from Rhizobium etli (strain CIAT 652).